The chain runs to 510 residues: NAD(P)H-quinone oxidoreductase subunit 2 B, chloroplastic (510 aa).

12 helical membrane passes run 24–44 (LLLFHGSFIFPECILIFGLIL), 57–77 (IPWLYFISSTSLVMSITALLF), 99–119 (IFQFLILLCSTLCIPLSVEYI), 124–144 (MAITEFLLFVLTATLGGMFLC), 183–203 (YLLMGGASSSILVHGFSWLYG), 227–247 (PGISIALISITVGIGFKLSPA), 295–315 (WHLLLEILAILSMILGNLIAI), 323–343 (MLAYSSIGQIGYVIIGIIVGD), 347–367 (GYASMITYMLFYISMNLGTFA), 395–415 (ALSSALCLLSLGGLPPLAGFF), 418–438 (LHLFWCGWQAGLYFLVSIGLL), and 484–504 (MIVCVIASTIPGISMNPIIAI).

It belongs to the complex I subunit 2 family. NDH is composed of at least 16 different subunits, 5 of which are encoded in the nucleus.

It localises to the plastid. It is found in the chloroplast thylakoid membrane. The enzyme catalyses a plastoquinone + NADH + (n+1) H(+)(in) = a plastoquinol + NAD(+) + n H(+)(out). It carries out the reaction a plastoquinone + NADPH + (n+1) H(+)(in) = a plastoquinol + NADP(+) + n H(+)(out). In terms of biological role, NDH shuttles electrons from NAD(P)H:plastoquinone, via FMN and iron-sulfur (Fe-S) centers, to quinones in the photosynthetic chain and possibly in a chloroplast respiratory chain. The immediate electron acceptor for the enzyme in this species is believed to be plastoquinone. Couples the redox reaction to proton translocation, and thus conserves the redox energy in a proton gradient. The polypeptide is NAD(P)H-quinone oxidoreductase subunit 2 B, chloroplastic (Calycanthus floridus var. glaucus (Eastern sweetshrub)).